The sequence spans 238 residues: Urease accessory protein UreF (238 aa).

This sequence belongs to the UreF family. In terms of assembly, ureD, UreF and UreG form a complex that acts as a GTP-hydrolysis-dependent molecular chaperone, activating the urease apoprotein by helping to assemble the nickel containing metallocenter of UreC. The UreE protein probably delivers the nickel.

The protein localises to the cytoplasm. In terms of biological role, required for maturation of urease via the functional incorporation of the urease nickel metallocenter. The chain is Urease accessory protein UreF from Delftia acidovorans (strain DSM 14801 / SPH-1).